A 912-amino-acid chain; its full sequence is Intercellular adhesion molecule 5 (912 aa).

An N-terminal signal peptide occupies residues 1-29 (MPGPSPGLRALLGFWVALGLGILRLSAVA). Over 30–826 (QEPFWADLQP…RITVRVAGPW (797 aa)) the chain is Extracellular. 9 Ig-like C2-type domains span residues 47–127 (GGSL…PLPP), 132–232 (GENF…RLLA), 239–324 (DSQS…LLTL), 332–395 (GKLV…NGSA), 403–481 (PRLD…VTLT), 486–561 (PALD…VAVT), 566–645 (PSFE…NPLG), 659–734 (PQMD…TVGV), and 738–819 (PVVA…RRIT). N-linked (GlcNAc...) (high mannose) asparagine glycosylation occurs at Asn-53. Intrachain disulfides connect Cys-54–Cys-97 and Cys-58–Cys-101. Asn-134 is a glycosylation site (N-linked (GlcNAc...) asparagine). The cysteines at positions 139 and 195 are disulfide-linked. Phosphothreonine occurs at positions 179 and 181. Residues Asn-192 and Asn-211 are each glycosylated (N-linked (GlcNAc...) asparagine). Cys-246 and Cys-297 are oxidised to a cystine. 3 N-linked (GlcNAc...) asparagine glycosylation sites follow: Asn-311, Asn-366, and Asn-392. Residues Cys-339 and Cys-378 are joined by a disulfide bond. 3 disulfide bridges follow: Cys-410–Cys-465, Cys-493–Cys-546, and Cys-573–Cys-638. 2 N-linked (GlcNAc...) asparagine glycosylation sites follow: Asn-576 and Asn-639. A disulfide bridge links Cys-666 with Cys-717. Residues 678–708 (AAGPACARGRPSPRVRCSREGAPRPARPRVS) form a disordered region. N-linked (GlcNAc...) asparagine glycans are attached at residues Asn-756, Asn-787, and Asn-788. Cys-761 and Cys-806 are joined by a disulfide. Residues 827-847 (LWIAVGGAVGGAVLLAAGAGL) traverse the membrane as a helical segment. The Cytoplasmic portion of the chain corresponds to 848-912 (AFYVQSTACK…EVFAIQLTSA (65 aa)). The tract at residues 880–902 (GGAGSGAEGGPEAEDSAESPAGG) is disordered.

This sequence belongs to the immunoglobulin superfamily. ICAM family. In terms of processing, glycosylation at Asn-53 is critical for functional folding. In terms of tissue distribution, expressed on neurons in the most rostral segment of the mammalian brain, the telencephalon.

The protein localises to the membrane. Functionally, ICAM proteins are ligands for the leukocyte adhesion protein LFA-1 (integrin alpha-L/beta-2). This chain is Intercellular adhesion molecule 5 (ICAM5), found in Oryctolagus cuniculus (Rabbit).